Here is a 512-residue protein sequence, read N- to C-terminus: ATP synthase subunit alpha (512 aa).

169–176 is an ATP binding site; that stretch reads GDRQTGKT.

The protein belongs to the ATPase alpha/beta chains family. In terms of assembly, F-type ATPases have 2 components, CF(1) - the catalytic core - and CF(0) - the membrane proton channel. CF(1) has five subunits: alpha(3), beta(3), gamma(1), delta(1), epsilon(1). CF(0) has three main subunits: a(1), b(2) and c(9-12). The alpha and beta chains form an alternating ring which encloses part of the gamma chain. CF(1) is attached to CF(0) by a central stalk formed by the gamma and epsilon chains, while a peripheral stalk is formed by the delta and b chains.

The protein localises to the cell inner membrane. It catalyses the reaction ATP + H2O + 4 H(+)(in) = ADP + phosphate + 5 H(+)(out). Produces ATP from ADP in the presence of a proton gradient across the membrane. The alpha chain is a regulatory subunit. The sequence is that of ATP synthase subunit alpha from Rickettsia canadensis (strain McKiel).